A 99-amino-acid chain; its full sequence is MDIEIVSERENPLLKRREIVLKVIHGEGPTPTRKSVVERLAAIKDSKPGLVVVRKMNSLFGRRESIAHARIYESEERMRQVENPHIVKRNVFTEQKEAS.

It belongs to the eukaryotic ribosomal protein eS24 family.

In Methanothrix thermoacetophila (strain DSM 6194 / JCM 14653 / NBRC 101360 / PT) (Methanosaeta thermophila), this protein is Small ribosomal subunit protein eS24.